Reading from the N-terminus, the 329-residue chain is MMWGAGRSMAWFSAGSGSVNVSIDPAEEPTGPATLLPSPRAWDVVLCISGTLVSCENALVVAIIVGTPAFRAPMFLLVGSLAVADLLAGLGLVLHFAADFCIGSPEMSLVLVGVLATAFTASIGSLLAITVDRYLSLYNALTYYSETTVTRTYVMLALVWVGALGLGLVPVLAWNCRDGLTTCGVVYPLSKNHLVVLAIVFFMVFGIMLQLYAQICRIVCRHAQQIALQRHLLPASHYVATRKGIATLAVVLGAFAACWLPFTVYCLLGDANSPPLYTYLTLLPATYNSMINPVIYAFRNQDVQKVLWAICCCCSTSKIPFRSRSPSDV.

At 1–43 the chain is on the extracellular side; that stretch reads MMWGAGRSMAWFSAGSGSVNVSIDPAEEPTGPATLLPSPRAWD. Asn20 is a glycosylation site (N-linked (GlcNAc...) asparagine). Residues 44–64 traverse the membrane as a helical segment; it reads VVLCISGTLVSCENALVVAII. Over 65-73 the chain is Cytoplasmic; sequence VGTPAFRAP. A helical membrane pass occupies residues 74–94; that stretch reads MFLLVGSLAVADLLAGLGLVL. Over 95–108 the chain is Extracellular; sequence HFAADFCIGSPEMS. A helical transmembrane segment spans residues 109 to 129; sequence LVLVGVLATAFTASIGSLLAI. The Cytoplasmic portion of the chain corresponds to 130–153; it reads TVDRYLSLYNALTYYSETTVTRTY. Residues 154–174 form a helical membrane-spanning segment; the sequence is VMLALVWVGALGLGLVPVLAW. The Extracellular portion of the chain corresponds to 175 to 192; it reads NCRDGLTTCGVVYPLSKN. A helical membrane pass occupies residues 193 to 213; sequence HLVVLAIVFFMVFGIMLQLYA. Topologically, residues 214-247 are cytoplasmic; it reads QICRIVCRHAQQIALQRHLLPASHYVATRKGIAT. The helical transmembrane segment at 248–268 threads the bilayer; sequence LAVVLGAFAACWLPFTVYCLL. Residues 269–277 are Extracellular-facing; it reads GDANSPPLY. Residues 278–298 traverse the membrane as a helical segment; the sequence is TYLTLLPATYNSMINPVIYAF. At 299-329 the chain is on the cytoplasmic side; sequence RNQDVQKVLWAICCCCSTSKIPFRSRSPSDV. Residue Cys312 is the site of S-palmitoyl cysteine attachment. Phosphoserine is present on residues Ser323, Ser325, and Ser327.

This sequence belongs to the G-protein coupled receptor 1 family. Abundantly expressed in granule neurons at all development stages. Enriched in the longest tips of neurites during differentiation of hippocampal neurons.

It is found in the cell membrane. In terms of biological role, constitutively active G-protein coupled receptor that maintains high 3'-5'-cyclic adenosine monophosphate (cAMP) levels that a plays a role in serveral processes including meiotic arrest in oocytes or neuronal development via activation of numerous intracellular signaling pathways. Acts as an essential activator of thermogenic adipocytes and drives thermogenesis via its intrinsic G(s)-coupling activity without the requirement of a ligand. Has a potential role in modulating a number of brain functions, including behavioral responses to stress, amyloid-beta peptide generation in neurons. Stimulates neurite outgrowth in cerebellar granular neurons modulated via PKA, ERK, and most strongly PI3K-mediated signaling pathways. The sequence is that of G-protein coupled receptor 3 (Gpr3) from Rattus norvegicus (Rat).